The sequence spans 315 residues: Aspartate carbamoyltransferase catalytic subunit (315 aa).

Carbamoyl phosphate is bound by residues Arg-55 and Thr-56. Lys-83 contributes to the L-aspartate binding site. Positions 105, 138, and 141 each coordinate carbamoyl phosphate. L-aspartate contacts are provided by Arg-171 and Arg-225. Gly-266 and Pro-267 together coordinate carbamoyl phosphate.

It belongs to the aspartate/ornithine carbamoyltransferase superfamily. ATCase family. In terms of assembly, heterododecamer (2C3:3R2) of six catalytic PyrB chains organized as two trimers (C3), and six regulatory PyrI chains organized as three dimers (R2).

It carries out the reaction carbamoyl phosphate + L-aspartate = N-carbamoyl-L-aspartate + phosphate + H(+). It participates in pyrimidine metabolism; UMP biosynthesis via de novo pathway; (S)-dihydroorotate from bicarbonate: step 2/3. In terms of biological role, catalyzes the condensation of carbamoyl phosphate and aspartate to form carbamoyl aspartate and inorganic phosphate, the committed step in the de novo pyrimidine nucleotide biosynthesis pathway. In Mycolicibacterium vanbaalenii (strain DSM 7251 / JCM 13017 / BCRC 16820 / KCTC 9966 / NRRL B-24157 / PYR-1) (Mycobacterium vanbaalenii), this protein is Aspartate carbamoyltransferase catalytic subunit.